Reading from the N-terminus, the 290-residue chain is Bifunctional protein FolD (290 aa).

NADP(+)-binding positions include 165–167 (GRG), S194, and I235.

The protein belongs to the tetrahydrofolate dehydrogenase/cyclohydrolase family. As to quaternary structure, homodimer.

It catalyses the reaction (6R)-5,10-methylene-5,6,7,8-tetrahydrofolate + NADP(+) = (6R)-5,10-methenyltetrahydrofolate + NADPH. The catalysed reaction is (6R)-5,10-methenyltetrahydrofolate + H2O = (6R)-10-formyltetrahydrofolate + H(+). Its pathway is one-carbon metabolism; tetrahydrofolate interconversion. In terms of biological role, catalyzes the oxidation of 5,10-methylenetetrahydrofolate to 5,10-methenyltetrahydrofolate and then the hydrolysis of 5,10-methenyltetrahydrofolate to 10-formyltetrahydrofolate. The chain is Bifunctional protein FolD from Syntrophotalea carbinolica (strain DSM 2380 / NBRC 103641 / GraBd1) (Pelobacter carbinolicus).